Reading from the N-terminus, the 274-residue chain is 2,3,4,5-tetrahydropyridine-2,6-dicarboxylate N-succinyltransferase (274 aa).

Substrate-binding residues include Arg105 and Asp142.

This sequence belongs to the transferase hexapeptide repeat family. As to quaternary structure, homotrimer.

The protein localises to the cytoplasm. The enzyme catalyses (S)-2,3,4,5-tetrahydrodipicolinate + succinyl-CoA + H2O = (S)-2-succinylamino-6-oxoheptanedioate + CoA. The protein operates within amino-acid biosynthesis; L-lysine biosynthesis via DAP pathway; LL-2,6-diaminopimelate from (S)-tetrahydrodipicolinate (succinylase route): step 1/3. The sequence is that of 2,3,4,5-tetrahydropyridine-2,6-dicarboxylate N-succinyltransferase from Thiobacillus denitrificans (strain ATCC 25259 / T1).